We begin with the raw amino-acid sequence, 380 residues long: Ubiquitin-like protein 7 (380 aa).

Residues 18–98 (TPKSILRLPE…VLRKSWPEPD (81 aa)) form the Ubiquitin-like domain. A disordered region spans residues 200 to 313 (APMPGTDSSS…SSGVQSGTPI (114 aa)). Over residues 206–221 (DSSSRSMPSSSYRDMP) the composition is skewed to low complexity. S230 is subject to Phosphoserine. 2 stretches are compositionally biased toward low complexity: residues 240 to 253 (TRSTPSSSTPSSRP) and 270 to 293 (SELATALALASTPESSSHTPTPGT). The segment covering 294–313 (QGHSSGTSPMSSGVQSGTPI) has biased composition (polar residues). In terms of domain architecture, UBA spans 333–377 (SLQSQWQPQLQQLRDMGIQDDELSLRALQATGGDIQAALELIFAG).

As to quaternary structure, binds ubiquitin. Interacts with MAVS; this interaction enhances TRIM21-dependent 'Lys-27'-linked polyubiquitination of MAVS. In terms of processing, deubiquitinated by OTUD4 which stabilizes UBL7 expression. As to expression, ubiquitous. Highly expressed in heart, skeletal muscle, testis, thyroid and adrenal gland.

In terms of biological role, interferon-stimulated protein that positively regulates RNA virus-triggered innate immune signaling. Mechanistically, promotes 'Lys-27'-linked polyubiquitination of MAVS through TRIM21 leading to enhanced the IFN signaling pathway. The protein is Ubiquitin-like protein 7 (UBL7) of Homo sapiens (Human).